The sequence spans 199 residues: Large ribosomal subunit protein bL25 (199 aa).

The interval 1-21 (MNIEKTLSVQKREGYGKGPSG) is disordered.

The protein belongs to the bacterial ribosomal protein bL25 family. CTC subfamily. As to quaternary structure, part of the 50S ribosomal subunit; part of the 5S rRNA/L5/L18/L25 subcomplex. Contacts the 5S rRNA. Binds to the 5S rRNA independently of L5 and L18.

Its function is as follows. This is one of the proteins that binds to the 5S RNA in the ribosome where it forms part of the central protuberance. The chain is Large ribosomal subunit protein bL25 from Desulfovibrio desulfuricans (strain ATCC 27774 / DSM 6949 / MB).